The primary structure comprises 412 residues: Multifunctional CCA protein (412 aa).

Gly-8 and Arg-11 together coordinate ATP. 2 residues coordinate CTP: Gly-8 and Arg-11. Positions 21 and 23 each coordinate Mg(2+). Residues Arg-91, Arg-137, and Arg-140 each contribute to the ATP site. CTP is bound by residues Arg-91, Arg-137, and Arg-140. Positions 228-329 constitute an HD domain; the sequence is TGIHTMMVLA…LKVFDKADAW (102 aa).

The protein belongs to the tRNA nucleotidyltransferase/poly(A) polymerase family. Bacterial CCA-adding enzyme type 1 subfamily. In terms of assembly, monomer. Can also form homodimers and oligomers. Mg(2+) is required as a cofactor. The cofactor is Ni(2+).

The catalysed reaction is a tRNA precursor + 2 CTP + ATP = a tRNA with a 3' CCA end + 3 diphosphate. The enzyme catalyses a tRNA with a 3' CCA end + 2 CTP + ATP = a tRNA with a 3' CCACCA end + 3 diphosphate. Catalyzes the addition and repair of the essential 3'-terminal CCA sequence in tRNAs without using a nucleic acid template. Adds these three nucleotides in the order of C, C, and A to the tRNA nucleotide-73, using CTP and ATP as substrates and producing inorganic pyrophosphate. tRNA 3'-terminal CCA addition is required both for tRNA processing and repair. Also involved in tRNA surveillance by mediating tandem CCA addition to generate a CCACCA at the 3' terminus of unstable tRNAs. While stable tRNAs receive only 3'-terminal CCA, unstable tRNAs are marked with CCACCA and rapidly degraded. This chain is Multifunctional CCA protein, found in Aeromonas hydrophila subsp. hydrophila (strain ATCC 7966 / DSM 30187 / BCRC 13018 / CCUG 14551 / JCM 1027 / KCTC 2358 / NCIMB 9240 / NCTC 8049).